We begin with the raw amino-acid sequence, 498 residues long: Probable cytosol aminopeptidase (498 aa).

Residues Lys-267 and Asp-272 each coordinate Mn(2+). Residue Lys-279 is part of the active site. Mn(2+) is bound by residues Asp-290, Asp-349, and Glu-351. The active site involves Arg-353.

Belongs to the peptidase M17 family. The cofactor is Mn(2+).

Its subcellular location is the cytoplasm. The catalysed reaction is Release of an N-terminal amino acid, Xaa-|-Yaa-, in which Xaa is preferably Leu, but may be other amino acids including Pro although not Arg or Lys, and Yaa may be Pro. Amino acid amides and methyl esters are also readily hydrolyzed, but rates on arylamides are exceedingly low.. The enzyme catalyses Release of an N-terminal amino acid, preferentially leucine, but not glutamic or aspartic acids.. Its function is as follows. Presumably involved in the processing and regular turnover of intracellular proteins. Catalyzes the removal of unsubstituted N-terminal amino acids from various peptides. This Dechloromonas aromatica (strain RCB) protein is Probable cytosol aminopeptidase.